Reading from the N-terminus, the 295-residue chain is Ethanolamine ammonia-lyase small subunit (295 aa).

Positions 207, 228, and 258 each coordinate adenosylcob(III)alamin.

It belongs to the EutC family. The basic unit is a heterodimer which dimerizes to form tetramers. The heterotetramers trimerize; 6 large subunits form a core ring with 6 small subunits projecting outwards. The cofactor is adenosylcob(III)alamin.

Its subcellular location is the bacterial microcompartment. The catalysed reaction is ethanolamine = acetaldehyde + NH4(+). It participates in amine and polyamine degradation; ethanolamine degradation. In terms of biological role, catalyzes the deamination of various vicinal amino-alcohols to oxo compounds. Allows this organism to utilize ethanolamine as the sole source of nitrogen and carbon in the presence of external vitamin B12. The sequence is that of Ethanolamine ammonia-lyase small subunit from Escherichia coli (strain SE11).